Here is a 514-residue protein sequence, read N- to C-terminus: Vacuolar aminopeptidase 1 (514 aa).

The propeptide at 1–45 (MEEQREILEQLKKTLQMLTVEPSKNNQIANEEKEKKENENSWCIL) is required for vacuolar localization. Mediates aggregation and vesicle formation in Cvt pathway. Residues Asn-107 and Asn-110 are each glycosylated (N-linked (GlcNAc...) asparagine). A Zn(2+)-binding site is contributed by His-132. A substrate-binding site is contributed by His-210. Asp-303, Glu-339, and Glu-340 together coordinate Zn(2+). Glu-339 contributes to the substrate binding site. Residue Ser-356 is modified to Phosphoserine. Asp-385 is a binding site for Zn(2+). Residues Asp-385 and His-388 each contribute to the substrate site. Asn-448 is a glycosylation site (N-linked (GlcNAc...) asparagine). Residue His-479 participates in Zn(2+) binding.

This sequence belongs to the peptidase M18 family. In terms of assembly, homododecamer. The precursor form of aminopeptidase 1 (prApe1) assembles into dodecamers and further aggregates into higher multimers (the Ape1 complex) in the cytoplasm. The Ape1 complex is disaggregated in the vacuolar lumen, but mature aminopeptidase 1 (mApe1) retains its dodecameric form. Dodecamer assembly in the cytoplasm is essential for formation of an enzymatically active complex. If cytoplasmic homododecamerization of prApe1 is disturbed in mutants, homododecamers of mApe1 will form in the vacuole, but they are enzymatically inactive. Interacts with ATG19. The cofactor is Zn(2+). In terms of processing, synthesized in a precursor form (prApe1) that has an amino-terminal propeptide. The N-terminal extension of the 61 kDa precursor is proteolytically processed in two sequential steps. The first step involves proteinase A (PrA/PEP4) and produces a 55 kDa unstable intermediate (iAPI). The second step involves proteinase B (PrB/PRB1) and converts iAPI into the 50 kDa stable, mature enzyme (mApe1).

The protein localises to the vacuole. The enzyme catalyses Release of an N-terminal amino acid, preferably a neutral or hydrophobic one, from a polypeptide. Aminoacyl-arylamides are poor substrates.. With respect to regulation, strongly and specifically activated by Cl(-) and Br(-), which act as positive allosteric effectors. Inactivated by metal-chelating agents. In terms of biological role, resident vacuolar enzyme that catalyzes the removal of amino acids from the N-terminus of peptides and proteins. Also acts as the major cargo protein of the cytoplasm-to-vacuole targeting (Cvt) pathway. The precursor form of aminopeptidase 1 (prApe1) assembles into dodecamers and the propeptide mediates the aggregation of dodecamers into higher multimers. The multimers are then recognized via the propeptide by their receptor ATG19, and ATG19 further interacts with ATG11, which tethers the APE1-ATG19 complex to the pre-autophagosomal structure (PAS). The cargo-receptor complex (also Cvt complex) is selectively enwrapped by a double-membrane structure termed the Cvt vesicle under vegetative growth conditions and by a similar but larger double-membrane structure termed the autophagosome under nitrogen starvation conditions. The Cvt vesicle or the autophagosome fuses with the vacuolar membrane and release its content in the vacuolar lumen. In the vacuole, prApe1 is processed into mature aminopeptidase 1 (mApe1). The protein is Vacuolar aminopeptidase 1 of Saccharomyces cerevisiae (strain ATCC 204508 / S288c) (Baker's yeast).